Consider the following 434-residue polypeptide: Transcription initiation factor IIE subunit alpha (434 aa).

The HTH TFE/IIEalpha-type domain occupies 8–99 (VQRLIKMIMR…DFCSTIDSIK (92 aa)). The C4-type zinc finger occupies 124–151 (CPFCNKKFSSLDVLSLVTNEGTFACNVC). 3 disordered regions span residues 217 to 251 (QQNL…EKRE), 357 to 408 (STDY…EMQE), and 415 to 434 (INGF…FEDV). The span at 226–238 (DVRLSTSSPSITV) shows a compositional bias: polar residues. Composition is skewed to basic and acidic residues over residues 241-251 (SADKETDEKRE) and 376-385 (IQNKRTKSIE). A compositionally biased stretch (polar residues) spans 386–399 (ENNSLPPIVSTNGI). Residues 419 to 434 (NEDDEDDEDEADFEDV) are compositionally biased toward acidic residues.

It belongs to the TFIIE alpha subunit family. In terms of assembly, TFIIE is a tetramer of two alpha (tfa1) and two beta (tfa2) subunits.

It localises to the nucleus. Its function is as follows. Recruits TFIIH to the initiation complex and stimulates the RNA polymerase II C-terminal domain kinase and DNA-dependent ATPase activities of TFIIH. Both TFIIH and TFIIE are required for promoter clearance by RNA polymerase. The protein is Transcription initiation factor IIE subunit alpha (tfa1) of Schizosaccharomyces pombe (strain 972 / ATCC 24843) (Fission yeast).